A 323-amino-acid chain; its full sequence is Methionyl-tRNA formyltransferase (323 aa).

Residue 121–124 (SLLP) participates in (6S)-5,6,7,8-tetrahydrofolate binding.

This sequence belongs to the Fmt family.

The enzyme catalyses L-methionyl-tRNA(fMet) + (6R)-10-formyltetrahydrofolate = N-formyl-L-methionyl-tRNA(fMet) + (6S)-5,6,7,8-tetrahydrofolate + H(+). In terms of biological role, attaches a formyl group to the free amino group of methionyl-tRNA(fMet). The formyl group appears to play a dual role in the initiator identity of N-formylmethionyl-tRNA by promoting its recognition by IF2 and preventing the misappropriation of this tRNA by the elongation apparatus. The protein is Methionyl-tRNA formyltransferase of Desulfotalea psychrophila (strain LSv54 / DSM 12343).